A 465-amino-acid polypeptide reads, in one-letter code: FAD-dependent monooxygenase olcE (465 aa).

A helical membrane pass occupies residues 9 to 29 (IIIGGSVAGLTLALSLNKIGI). FAD-binding residues include glutamate 35, glycine 49, arginine 108, aspartate 308, and alanine 321.

Belongs to the paxM FAD-dependent monooxygenase family. Requires FAD as cofactor.

Its subcellular location is the membrane. Its pathway is secondary metabolite biosynthesis; terpenoid biosynthesis. In terms of biological role, FAD-dependent monooxygenase; part of the gene cluster that mediates the biosynthesis of 15-deoxyoxalicine B. The first step of the pathway is the synthesis of nicotinyl-CoA from nicotinic acid by the nicotinic acid-CoA ligase olcI. Nicotinyl-CoA is then a substrate of polyketide synthase olcA to produce 4-hydroxy-6-(3-pyridinyl)-2H-pyran-2-one (HPPO) which is further prenylated by the polyprenyl transferase olcH to yield geranylgeranyl-HPPO. Geranylgeranyl pyrophosphate is provided by the cluster-specific geranylgeranyl pyrophosphate synthase olcC. The FAD-dependent monooxygenase olcE catalyzes the epoxidation of geranylgeranyl-HPPO and the terpene cyclase olcD catalyzes the cyclization of the terpenoid component, resulting in the formation of the tricyclic terpene moiety seen in predecaturin E. The cytochrome P450 monooxygenase then catalyzes the allylic oxidation of predecaturin E, which is followed by spirocylization with concomitant loss of one molecule of water to form decaturin E. Decaturin E is the substrate of the cytochrome P450 monooxygenase olcJ which hydroxylates it at the C-29 position to form decaturin F. The short-chain dehydrogenase/reductase olcF may catalyze the oxidation of decaturin F to generate the 29-hydroxyl-27-one intermediate, and subsequent hemiacetal formation probably leads to the formation of decaturin C. The dioxygenase olcK may be a peroxisomal enzyme that catalyzes the hydroxylation of decaturin C into decaturin A once decaturin C is shuttled into the peroxisome by the MFS transporter olcL. Finally the cytochrome P450 monooxygenase olcB catalyzes the oxidative rearrangement to yield 15-deoxyoxalicine B. In the absence of olcJ, decaturin E may be shunted to a pathway in which it is oxidized to a ketone, possibly by olcF, to form decaturin D, which undergoes further allylic oxidation to yield decaturin G. Moreover, in the absence of oclK or oclL, oclB can convert decaturin C into 15-deoxyoxalicine A. The chain is FAD-dependent monooxygenase olcE from Penicillium canescens.